The chain runs to 391 residues: Ammonium transporter Amt1 (391 aa).

10 helical membrane-spanning segments follow: residues 12–32, 51–71, 88–108, 112–132, 152–172, 192–212, 223–243, 261–281, 305–325, and 338–358; these read VFFF…FIAL, LDLA…SYGF, AWWM…TGGV, IKIL…YPIV, AGSG…AYVL, IPIA…FNIG, LASV…GGAL, VAVC…VGLL, IGPV…IPFL, and GQII…LIIY.

It belongs to the ammonia transporter channel (TC 1.A.11.2) family. In terms of assembly, homotrimer. Interacts and forms a complex with GlnK1.

It is found in the cell membrane. Its activity is regulated as follows. Activity is regulated by the nitrogen regulatory protein GlnK1 via direct interaction. Formation of the GlnK1/Amt1 complex is decreased in the presence of Mg-ATP or 2-oxoglutarate. The presence of both effectors abolishes the formation of the complex. Functionally, involved in the uptake of ammonium/ammonia (NH(4)(+)/NH(3)). Transport is electrogenic. The chain is Ammonium transporter Amt1 from Methanocaldococcus jannaschii (strain ATCC 43067 / DSM 2661 / JAL-1 / JCM 10045 / NBRC 100440) (Methanococcus jannaschii).